A 503-amino-acid polypeptide reads, in one-letter code: tRNA-guanine(15) transglycosylase (503 aa).

Asp-86 (nucleophile) is an active-site residue. A substrate-binding site is contributed by Asp-121. Zn(2+)-binding residues include Cys-278, Cys-280, and Cys-283.

Belongs to the archaeosine tRNA-ribosyltransferase family. Requires Zn(2+) as cofactor.

The enzyme catalyses guanosine(15) in tRNA + 7-cyano-7-deazaguanine = 7-cyano-7-carbaguanosine(15) in tRNA + guanine. It participates in tRNA modification; archaeosine-tRNA biosynthesis. In terms of biological role, exchanges the guanine residue with 7-cyano-7-deazaguanine (preQ0) at position 15 in the dihydrouridine loop (D-loop) of archaeal tRNAs. The sequence is that of tRNA-guanine(15) transglycosylase from Saccharolobus solfataricus (strain ATCC 35092 / DSM 1617 / JCM 11322 / P2) (Sulfolobus solfataricus).